We begin with the raw amino-acid sequence, 64 residues long: Large ribosomal subunit protein bL28 (64 aa).

The interval 1–21 (MAKKDQLTLRGPLYGNNRSHS) is disordered.

This sequence belongs to the bacterial ribosomal protein bL28 family.

This is Large ribosomal subunit protein bL28 from Mycoplasma genitalium (strain ATCC 33530 / DSM 19775 / NCTC 10195 / G37) (Mycoplasmoides genitalium).